The primary structure comprises 400 residues: Formate-dependent phosphoribosylglycinamide formyltransferase (400 aa).

N(1)-(5-phospho-beta-D-ribosyl)glycinamide-binding positions include 22–23 (EL) and Glu82. ATP contacts are provided by residues Arg115, Lys156, 161 to 166 (SSGKGQ), 196 to 199 (EGFI), and Glu204. The 190-residue stretch at 120 to 309 (RLAAETLCLP…EFALHARAIL (190 aa)) folds into the ATP-grasp domain. Residues Glu268 and Glu280 each contribute to the Mg(2+) site. N(1)-(5-phospho-beta-D-ribosyl)glycinamide contacts are provided by residues Asp287, Lys361, and 368–369 (RR).

Belongs to the PurK/PurT family. Homodimer.

It catalyses the reaction N(1)-(5-phospho-beta-D-ribosyl)glycinamide + formate + ATP = N(2)-formyl-N(1)-(5-phospho-beta-D-ribosyl)glycinamide + ADP + phosphate + H(+). Its pathway is purine metabolism; IMP biosynthesis via de novo pathway; N(2)-formyl-N(1)-(5-phospho-D-ribosyl)glycinamide from N(1)-(5-phospho-D-ribosyl)glycinamide (formate route): step 1/1. Functionally, involved in the de novo purine biosynthesis. Catalyzes the transfer of formate to 5-phospho-ribosyl-glycinamide (GAR), producing 5-phospho-ribosyl-N-formylglycinamide (FGAR). Formate is provided by PurU via hydrolysis of 10-formyl-tetrahydrofolate. This chain is Formate-dependent phosphoribosylglycinamide formyltransferase, found in Xanthomonas euvesicatoria pv. vesicatoria (strain 85-10) (Xanthomonas campestris pv. vesicatoria).